The following is a 462-amino-acid chain: NAD-capped RNA hydrolase NUDT12 (462 aa).

ANK repeat units lie at residues 11 to 40 (EIVT…SLLN), 45 to 74 (NGWT…DRSI), and 78 to 98 (SRQT…ANLL). K185 carries the post-translational modification N6-succinyllysine. 2 residues coordinate Zn(2+): C284 and C287. K292 bears the N6-succinyllysine mark. Zn(2+)-binding residues include C302 and C307. Substrate-binding positions include Y318, 354-356 (AGF), E370, E374, and E415. Positions 319–453 (PRVDPVVIMQ…SRAIAHQLIK (135 aa)) constitute a Nudix hydrolase domain. Residues A354, E370, E374, and E415 each coordinate Mg(2+). The short motif at 355–376 (GFIEPGETIEDAVRREVEEESG) is the Nudix box element. The short motif at 460 to 462 (PNL) is the Microbody targeting signal element.

The protein belongs to the Nudix hydrolase family. NudC subfamily. As to quaternary structure, homodimer. Homodimerization is essential for its catalytic activity and protein stability. Interacts (via ANK repeats) with BLMH. Mg(2+) is required as a cofactor. The cofactor is Zn(2+).

Its subcellular location is the cytoplasm. It localises to the peroxisome. It is found in the cytoplasmic granule. It carries out the reaction a 5'-end NAD(+)-phospho-ribonucleoside in mRNA + H2O = a 5'-end phospho-adenosine-phospho-ribonucleoside in mRNA + beta-nicotinamide D-ribonucleotide + 2 H(+). The catalysed reaction is NAD(+) + H2O = beta-nicotinamide D-ribonucleotide + AMP + 2 H(+). It catalyses the reaction NADH + H2O = reduced beta-nicotinamide D-ribonucleotide + AMP + 2 H(+). The enzyme catalyses NADPH + H2O = reduced beta-nicotinamide D-ribonucleotide + adenosine 2',5'-bisphosphate + 2 H(+). MRNA decapping enzyme that specifically removes the nicotinamide adenine dinucleotide (NAD) cap from a subset of mRNAs by hydrolyzing the diphosphate linkage to produce nicotinamide mononucleotide (NMN) and 5' monophosphate mRNA. The NAD-cap is present at the 5'-end of some RNAs; in contrast to the canonical N7 methylguanosine (m7G) cap, the NAD cap promotes mRNA decay. Preferentially acts on NAD-capped transcripts in response to nutrient stress. Also acts on free nicotinamide adenine dinucleotide molecules: hydrolyzes NAD(H) into NMN(H) and AMP, and NADPH into NMNH and 2',5'-ADP. May act to regulate the concentration of peroxisomal nicotinamide nucleotide cofactors required for oxidative metabolism in this organelle. Regulates the levels of circadian clock components PER1, PER2, PER3 and CRY2 in the liver. This chain is NAD-capped RNA hydrolase NUDT12, found in Macaca fascicularis (Crab-eating macaque).